We begin with the raw amino-acid sequence, 403 residues long: Arginine deiminase (403 aa).

Cys388 serves as the catalytic Amidino-cysteine intermediate.

Belongs to the arginine deiminase family.

The protein localises to the cytoplasm. It carries out the reaction L-arginine + H2O = L-citrulline + NH4(+). Its pathway is amino-acid degradation; L-arginine degradation via ADI pathway; carbamoyl phosphate from L-arginine: step 1/2. The sequence is that of Arginine deiminase from Mycoplasma capricolum subsp. capricolum (strain California kid / ATCC 27343 / NCTC 10154).